The sequence spans 486 residues: Galactose-3-O-sulfotransferase 4 (486 aa).

Over 1-18 (MGPLSPARTLRLWGPRSL) the chain is Cytoplasmic. The chain crosses the membrane as a helical; Signal-anchor for type II membrane protein span at residues 19-39 (GVALGVFMTIGFALQLLGGPF). Topologically, residues 40–486 (QRRLPGLQLR…PLKTSRPLSP (447 aa)) are lumenal. Asparagine 374 carries N-linked (GlcNAc...) asparagine glycosylation.

This sequence belongs to the galactose-3-O-sulfotransferase family. The cofactor is Mn(2+). Expressed mainly in placenta, thymus, testis, ovary, spinal cord, trachea and adrenal gland and at low levels in brain, lung, spleen, prostate, small intestine, colon, stomach thyroid and lymph node.

It is found in the golgi apparatus. It localises to the golgi stack membrane. It functions in the pathway protein modification; carbohydrate sulfation. Functionally, catalyzes the transfer of sulfate to beta-1,3-linked galactose residues in O-linked glycoproteins. Good substrates include asialofetuin, Gal-beta-1,3-GalNAc and Gal-beta-1,3 (GlcNAc-beta-1,6)GalNAc. This Homo sapiens (Human) protein is Galactose-3-O-sulfotransferase 4 (GAL3ST4).